A 535-amino-acid chain; its full sequence is RNA-splicing ligase RtcB homolog 1 (535 aa).

A compositionally biased stretch (basic residues) spans 1–16 (MAKSRYSRKNKGKKLQ). Residues 1-29 (MAKSRYSRKNKGKKLQRVQENTVSTEEKS) form a disordered region. 5 residues coordinate Mn(2+): Asp-152, Cys-155, His-260, His-292, and His-383. 259–263 (NHYLE) contributes to the GMP binding site. GMP-binding positions include 383–384 (HN), 432–435 (GGSM), Ser-439, 458–461 (HGAG), and Lys-534. The active-site GMP-histidine intermediate is His-458.

The protein belongs to the RtcB family. Catalytic component of the tRNA-splicing ligase complex. Mn(2+) serves as cofactor.

It catalyses the reaction a 3'-end 3'-phospho-ribonucleotide-RNA + a 5'-end dephospho-ribonucleoside-RNA + GTP = a ribonucleotidyl-ribonucleotide-RNA + GMP + diphosphate. The enzyme catalyses a 3'-end 2',3'-cyclophospho-ribonucleotide-RNA + a 5'-end dephospho-ribonucleoside-RNA + GTP + H2O = a ribonucleotidyl-ribonucleotide-RNA + GMP + diphosphate + H(+). Functionally, catalytic subunit of the tRNA-splicing ligase complex that acts by directly joining spliced tRNA halves to mature-sized tRNAs by incorporating the precursor-derived splice junction phosphate into the mature tRNA as a canonical 3',5'-phosphodiester. May act as an RNA ligase with broad substrate specificity, and may function toward other RNAs. This chain is RNA-splicing ligase RtcB homolog 1, found in Entamoeba dispar (strain ATCC PRA-260 / SAW760).